The chain runs to 321 residues: Lipoyl synthase (321 aa).

Residues cysteine 68, cysteine 73, cysteine 79, cysteine 94, cysteine 98, cysteine 101, and serine 308 each contribute to the [4Fe-4S] cluster site. Residues 80-297 form the Radical SAM core domain; the sequence is FNHGTATFMI…KVLADELGFT (218 aa).

The protein belongs to the radical SAM superfamily. Lipoyl synthase family. [4Fe-4S] cluster serves as cofactor.

The protein resides in the cytoplasm. It catalyses the reaction [[Fe-S] cluster scaffold protein carrying a second [4Fe-4S](2+) cluster] + N(6)-octanoyl-L-lysyl-[protein] + 2 oxidized [2Fe-2S]-[ferredoxin] + 2 S-adenosyl-L-methionine + 4 H(+) = [[Fe-S] cluster scaffold protein] + N(6)-[(R)-dihydrolipoyl]-L-lysyl-[protein] + 4 Fe(3+) + 2 hydrogen sulfide + 2 5'-deoxyadenosine + 2 L-methionine + 2 reduced [2Fe-2S]-[ferredoxin]. The protein operates within protein modification; protein lipoylation via endogenous pathway; protein N(6)-(lipoyl)lysine from octanoyl-[acyl-carrier-protein]: step 2/2. In terms of biological role, catalyzes the radical-mediated insertion of two sulfur atoms into the C-6 and C-8 positions of the octanoyl moiety bound to the lipoyl domains of lipoate-dependent enzymes, thereby converting the octanoylated domains into lipoylated derivatives. In Shewanella sp. (strain ANA-3), this protein is Lipoyl synthase.